The chain runs to 399 residues: UDP-galactopyranose mutase (399 aa).

FAD-binding positions include Ser-25, Glu-44–Lys-45, Asn-52, and His-71–Ile-72. The UDP-alpha-D-galactose site is built by Ser-171, Trp-175, Tyr-200, Asn-297, Arg-306, and Tyr-345. Arg-374 contributes to the FAD binding site. Tyr-380 contacts UDP-alpha-D-galactose. Residue Ile-381 to Ala-386 participates in FAD binding.

It belongs to the UDP-galactopyranose/dTDP-fucopyranose mutase family. FAD is required as a cofactor.

It catalyses the reaction UDP-alpha-D-galactose = UDP-alpha-D-galactofuranose. In terms of biological role, involved in the conversion of UDP-GalP into UDP-GalF through a 2-keto intermediate. The polypeptide is UDP-galactopyranose mutase (glf) (Mycoplasma pneumoniae (strain ATCC 29342 / M129 / Subtype 1) (Mycoplasmoides pneumoniae)).